An 819-amino-acid polypeptide reads, in one-letter code: Hypoxia-inducible factor 1-alpha (819 aa).

Residues 1–31 (MEGAAGGEEKKNRMSSERRKEKSRDAARSRR) form a disordered region. The segment at 1–402 (MEGAAGGEEK…KEPDALTLLA (402 aa)) is interaction with TSGA10. Residues 7–31 (GEEKKNRMSSERRKEKSRDAARSRR) show a composition bias toward basic and acidic residues. The region spanning 18–71 (RRKEKSRDAARSRRSKESEVFYELAHQLPLPHNVSSHLDKASVMRLTISYLRVR) is the bHLH domain. Residues 22-31 (KSRDAARSRR) form a DNA-binding region. One can recognise a PAS 1 domain in the interval 86 to 159 (KAQMNCFYLK…THRNGPIKKG (74 aa)). Positions 171–192 (RMKCTLTSRGRTMNIKSATWKV) are required for heterodimer formation with ARNT. In terms of domain architecture, PAS 2 spans 229-299 (PHPSNIEIPL…KTHHDMFTKG (71 aa)). At Ser248 the chain carries Phosphoserine; by CK1. Residues 303–346 (TGQYRMLAKRGGYVWVETQATVIYNTKNSQPQCIVCVNYVVSGI) form the PAC domain. Residues 402-599 (APAAGDTIIS…NPPSVSTAFQ (198 aa)) form an ODD region. The residue at position 403 (Pro403) is a 4-hydroxyproline. The segment covering 495–518 (IQDQPASPSDGSTRQSSPEPNSPS) has biased composition (polar residues). The tract at residues 495-521 (IQDQPASPSDGSTRQSSPEPNSPSEYC) is disordered. The interval 532–576 (FKLELVEKLFAEDTEAKNPFSTQDTDLDLEMLAPYIPMDDDFQLR) is NTAD. Lys533 is modified (N6-acetyllysine; alternate). Lys533 participates in a covalent cross-link: Glycyl lysine isopeptide (Lys-Gly) (interchain with G-Cter in ubiquitin); alternate. Residues Lys539 and Lys548 each participate in a glycyl lysine isopeptide (Lys-Gly) (interchain with G-Cter in ubiquitin) cross-link. Ser552 is modified (phosphoserine; by GSK3-beta). At Thr556 the chain carries Phosphothreonine; by GSK3-beta. Residue Pro565 is modified to 4-hydroxyproline. Ser577 bears the Phosphoserine; by PLK3 mark. The interval 577-778 (SFDQLSPLES…SDLACRLLGQ (202 aa)) is ID. A disordered region spans residues 581 to 685 (LSPLESSSPN…SHPRSPNVLS (105 aa)). Residues 582–613 (SPLESSSPNPPSVSTAFQQTQLQEPTITTTTT) show a composition bias toward low complexity. Basic and acidic residues predominate over residues 614 to 628 (EELKTVTKDSTEDIK). A compositionally biased stretch (low complexity) spans 632-655 (TSPSSTHTPKETTTATTSSPYSGT). The residue at position 650 (Ser650) is a Phosphoserine; by PLK3. Lys702 is subject to N6-acetyllysine. The Nuclear localization signal signature appears at 711 to 717 (RKRKMEH). Residues 779–819 (SMDGSGLPQLTSYDCEVNAPIQGSRNLLQGEELLRALDQVN) are CTAD. Residue Cys793 is modified to S-nitrosocysteine. Asn796 is subject to (3S)-3-hydroxyasparagine.

As to quaternary structure, interacts with the ARNT; forms a heterodimer that binds core DNA sequence 5'-TACGTG-3' within the hypoxia response element (HRE) of target gene promoters. Interacts with COPS5; the interaction increases the transcriptional activity of HIF1A through increased stability. Interacts with EP300 (via TAZ-type 1 domains); the interaction is stimulated in response to hypoxia and inhibited by CITED2. Interacts with CREBBP (via TAZ-type 1 domains). Interacts with NCOA1, NCOA2, APEX1 and HSP90. Interacts (hydroxylated within the ODD domain) with VHLL (via beta domain); the interaction, leads to polyubiquitination and subsequent HIF1A proteasomal degradation. During hypoxia, sumoylated HIF1A also binds VHL; the interaction promotes the ubiquitination of HIF1A. Interacts with SENP1; the interaction desumoylates HIF1A resulting in stabilization and activation of transcription. Interacts (via the ODD domain) with NAA10; the interaction appears not to acetylate HIF1A nor have any affect on protein stability, during hypoxia. Interacts with RWDD3; the interaction enhances HIF1A sumoylation. Interacts with TSGA10. Interacts with HIF3A. Interacts with RORA (via the DNA binding domain); the interaction enhances HIF1A transcription under hypoxia through increasing protein stability. Interaction with PSMA7 inhibits the transactivation activity of HIF1A under both normoxic and hypoxia-mimicking conditions. Interacts with USP20. Interacts with RACK1; promotes HIF1A ubiquitination and proteasome-mediated degradation. Interacts (via N-terminus) with USP19. Interacts with SIRT2. Interacts (deacetylated form) with EGLN1. Interacts with CBFA2T3. Interacts with HSP90AA1 and HSP90AB1. Interacts with DCUN1D1; this interaction increases the interaction between VHL and DCUN1D1. Interacts with HIF1AN. In terms of processing, S-nitrosylation of Cys-793 may be responsible for increased recruitment of p300 coactivator necessary for transcriptional activity of HIF-1 complex. Acetylation of Lys-533 by ARD1 increases interaction with VHL and stimulates subsequent proteasomal degradation. Deacetylation of Lys-702 by SIRT2 increases its interaction with and hydroxylation by EGLN1 thereby inactivating HIF1A activity by inducing its proteasomal degradation. Post-translationally, requires phosphorylation for DNA-binding. Phosphorylation at Ser-248 by CSNK1D/CK1 represses kinase activity and impairs ARNT binding. Phosphorylation by GSK3-beta and PLK3 promote degradation by the proteasome. In terms of processing, the iron and 2-oxoglutarate dependent 3-hydroxylation of asparagine is (S) stereospecific within HIF CTAD domains. Sumoylated; with SUMO1 under hypoxia. Sumoylation is enhanced through interaction with RWDD3. Both sumoylation and desumoylation seem to be involved in the regulation of its stability during hypoxia. Sumoylation can promote either its stabilization or its VHL-dependent degradation by promoting hydroxyproline-independent HIF1A-VHL complex binding, thus leading to HIF1A ubiquitination and proteasomal degradation. Desumoylation by SENP1 increases its stability amd transcriptional activity. There is a disaccord between various publications on the effect of sumoylation and desumoylation on its stability and transcriptional activity. Post-translationally, in normoxia, is hydroxylated on Pro-403 and Pro-565 in the oxygen-dependent degradation domain (ODD) by EGLN1/PHD2 and EGLN2/PHD1. EGLN3/PHD3 has also been shown to hydroxylate Pro-565. The hydroxylated prolines promote interaction with VHL, initiating rapid ubiquitination and subsequent proteasomal degradation. Deubiquitinated by USP20. Under hypoxia, proline hydroxylation is impaired and ubiquitination is attenuated, resulting in stabilization. In normoxia, is hydroxylated on Asn-796 by HIF1AN, thus abrogating interaction with CREBBP and EP300 and preventing transcriptional activation. Repressed by iron ion, via Fe(2+) prolyl hydroxylase (PHD) enzymes-mediated hydroxylation and subsequent proteasomal degradation.

It is found in the cytoplasm. The protein localises to the nucleus. Its subcellular location is the nucleus speckle. Induced by reactive oxygen species (ROS). Functions as a master transcriptional regulator of the adaptive response to hypoxia. Under hypoxic conditions, activates the transcription of over 40 genes, including erythropoietin, glucose transporters, glycolytic enzymes, vascular endothelial growth factor, HILPDA, and other genes whose protein products increase oxygen delivery or facilitate metabolic adaptation to hypoxia. Plays an essential role in embryonic vascularization, tumor angiogenesis and pathophysiology of ischemic disease. Heterodimerizes with ARNT; heterodimer binds to core DNA sequence 5'-TACGTG-3' within the hypoxia response element (HRE) of target gene promoters. Activation requires recruitment of transcriptional coactivators such as CREBBP and EP300. Activity is enhanced by interaction with NCOA1 and/or NCOA2. Interaction with redox regulatory protein APEX1 seems to activate CTAD and potentiates activation by NCOA1 and CREBBP. Involved in the axonal distribution and transport of mitochondria in neurons during hypoxia. The polypeptide is Hypoxia-inducible factor 1-alpha (HIF1A) (Eospalax fontanierii baileyi (Plateau zokor)).